The sequence spans 206 residues: Pyridoxine/pyridoxamine 5'-phosphate oxidase (206 aa).

FMN-binding positions include 53–58 (RMVLLK), 68–69 (YT), Lys75, and Gln97. Lys58 is a binding site for substrate. Tyr115, Arg119, and Ser123 together coordinate substrate. FMN contacts are provided by residues 132–133 (QS) and Trp177. 183–185 (RLH) provides a ligand contact to substrate. Residue Arg187 participates in FMN binding.

Belongs to the pyridoxamine 5'-phosphate oxidase family. Homodimer. FMN serves as cofactor.

The enzyme catalyses pyridoxamine 5'-phosphate + O2 + H2O = pyridoxal 5'-phosphate + H2O2 + NH4(+). The catalysed reaction is pyridoxine 5'-phosphate + O2 = pyridoxal 5'-phosphate + H2O2. It functions in the pathway cofactor metabolism; pyridoxal 5'-phosphate salvage; pyridoxal 5'-phosphate from pyridoxamine 5'-phosphate: step 1/1. The protein operates within cofactor metabolism; pyridoxal 5'-phosphate salvage; pyridoxal 5'-phosphate from pyridoxine 5'-phosphate: step 1/1. Catalyzes the oxidation of either pyridoxine 5'-phosphate (PNP) or pyridoxamine 5'-phosphate (PMP) into pyridoxal 5'-phosphate (PLP). In Allorhizobium ampelinum (strain ATCC BAA-846 / DSM 112012 / S4) (Agrobacterium vitis (strain S4)), this protein is Pyridoxine/pyridoxamine 5'-phosphate oxidase.